The following is a 336-amino-acid chain: Holliday junction branch migration complex subunit RuvB (336 aa).

The large ATPase domain (RuvB-L) stretch occupies residues 4–184; it reads ADRLISAGTT…FGIVQRLEFY (181 aa). ATP-binding positions include Ile23, Arg24, Gly65, Lys68, Thr69, Thr70, 131-133, Arg174, Tyr184, and Arg221; that span reads EDY. Thr69 serves as a coordination point for Mg(2+). The tract at residues 185 to 255 is small ATPAse domain (RuvB-S); sequence QVPDLQYIVS…IAAQALDMLN (71 aa). The interval 258–336 is head domain (RuvB-H); the sequence is AEGFDYMDRK…HFGITPPEMP (79 aa). Arg294, Arg313, and Arg318 together coordinate DNA.

Belongs to the RuvB family. In terms of assembly, homohexamer. Forms an RuvA(8)-RuvB(12)-Holliday junction (HJ) complex. HJ DNA is sandwiched between 2 RuvA tetramers; dsDNA enters through RuvA and exits via RuvB. An RuvB hexamer assembles on each DNA strand where it exits the tetramer. Each RuvB hexamer is contacted by two RuvA subunits (via domain III) on 2 adjacent RuvB subunits; this complex drives branch migration. In the full resolvosome a probable DNA-RuvA(4)-RuvB(12)-RuvC(2) complex forms which resolves the HJ.

The protein resides in the cytoplasm. It catalyses the reaction ATP + H2O = ADP + phosphate + H(+). Functionally, the RuvA-RuvB-RuvC complex processes Holliday junction (HJ) DNA during genetic recombination and DNA repair, while the RuvA-RuvB complex plays an important role in the rescue of blocked DNA replication forks via replication fork reversal (RFR). RuvA specifically binds to HJ cruciform DNA, conferring on it an open structure. The RuvB hexamer acts as an ATP-dependent pump, pulling dsDNA into and through the RuvAB complex. RuvB forms 2 homohexamers on either side of HJ DNA bound by 1 or 2 RuvA tetramers; 4 subunits per hexamer contact DNA at a time. Coordinated motions by a converter formed by DNA-disengaged RuvB subunits stimulates ATP hydrolysis and nucleotide exchange. Immobilization of the converter enables RuvB to convert the ATP-contained energy into a lever motion, pulling 2 nucleotides of DNA out of the RuvA tetramer per ATP hydrolyzed, thus driving DNA branch migration. The RuvB motors rotate together with the DNA substrate, which together with the progressing nucleotide cycle form the mechanistic basis for DNA recombination by continuous HJ branch migration. Branch migration allows RuvC to scan DNA until it finds its consensus sequence, where it cleaves and resolves cruciform DNA. The chain is Holliday junction branch migration complex subunit RuvB from Shigella boydii serotype 18 (strain CDC 3083-94 / BS512).